A 694-amino-acid polypeptide reads, in one-letter code: N,N-dimethylglycine/sarcosine dehydrogenase (694 aa).

This sequence in the N-terminal section; belongs to the NADH:flavin oxidoreductase/NADH oxidase family. Monomer. The purified enzyme exists in the form of a monomer, dimer or polymer under non-denaturing conditions, but only the monomeric protein exhibits enzyme activity. FAD serves as cofactor. Requires NAD(+) as cofactor. NADP(+) is required as a cofactor.

It localises to the cytoplasm. It carries out the reaction oxidized 2[4Fe-4S]-[ferredoxin] + N,N-dimethylglycine + H2O = reduced 2[4Fe-4S]-[ferredoxin] + sarcosine + formaldehyde + 2 H(+). The enzyme catalyses oxidized 2[4Fe-4S]-[ferredoxin] + sarcosine + H2O = reduced 2[4Fe-4S]-[ferredoxin] + formaldehyde + glycine + 2 H(+). Its activity is regulated as follows. Ca(2+) increases the activity by 12%, while the other metal ions tested have no or slightly inhibitory effects. The chelating agent EDTA inhibits the activity by 33%. Its function is as follows. Involved in degradation of glycine betaine. Catalyzes the demethylation of both N,N-dimethylglycine (DMG) and sarcosine, releasing formaldehyde and forming glycine as the final product. Does not show activity toward trimethylamine (TMA), histamine, glycine betaine (GB) or choline. The C-N bond in DMG is probably oxidized by removal of a hydride equivalent to form a labile imine intermediate, which is then spontaneously hydrolyzed in the presence of water, producing sarcosine and formaldehyde. The two protons subtracted from DMG are transferred to the non-covalently bound FAD, resulting in the reduced form of FAD, which is subsequently reoxidized by coupling with reduction of the enzyme-bound NAD(P)(+). Regeneration of NAD(P)(+) is achieved by electron transfer to the [4Fe-4S] cluster in the probable membrane-anchored ferredoxin csal_0991. This is N,N-dimethylglycine/sarcosine dehydrogenase from Chromohalobacter salexigens (strain ATCC BAA-138 / DSM 3043 / CIP 106854 / NCIMB 13768 / 1H11).